A 278-amino-acid chain; its full sequence is Glycyl-dTMP PLP-dependent decarboxylase (278 aa).

This sequence belongs to the pyridoxal-phosphate-dependent aminodecarboxylase family.

It carries out the reaction 5-C(alpha)-glycyl-dTMP in DNA + H(+) = 5-aminoethyl-dUMP in DNA + CO2. Functionally, converts 5-Calpha-glycinylthymidine (Calpha-GlyT) into 5-aminoethyl-2'-deoxyuridine (5-NedU) as a step in the pathway leading to thymidine hypermodifications in the viral genome. As a final result of the pathway of hypermodification, 5-aminoethyl-2'-deoxyuridine (5-NedU) substitutes for about 30% of thymidines in the viral DNA. These modifications probably prevent degradation of viral genome by the host restriction-modification antiviral defense system. In Pseudomonas aeruginosa, this protein is Glycyl-dTMP PLP-dependent decarboxylase.